A 489-amino-acid chain; its full sequence is Membrane-bound acylglycerophosphatidylinositol O-acyltransferase frj (489 aa).

3 consecutive transmembrane segments (helical) span residues Ser2–Val22, Val40–Leu60, and Leu75–Phe95. Residues Asn331 and His364 contribute to the active site. Helical transmembrane passes span Val405–Ser425 and Phe433–Phe453.

The protein belongs to the membrane-bound acyltransferase family.

It localises to the membrane. It carries out the reaction a 1-acyl-sn-glycero-3-phospho-(1D-myo-inositol) + (5Z,8Z,11Z,14Z)-eicosatetraenoyl-CoA = a 1-acyl-2-(5Z,8Z,11Z,14Z-eicosatetraenoyl)-sn-glycero-3-phospho-(1D-myo-inositol) + CoA. It catalyses the reaction a 1-acyl-sn-glycero-3-phosphocholine + an acyl-CoA = a 1,2-diacyl-sn-glycero-3-phosphocholine + CoA. The enzyme catalyses (9Z)-hexadecenoyl-CoA + 1-hexadecanoyl-sn-glycero-3-phosphocholine = 1-hexadecanoyl-2-(9Z-hexadecenoyl)-sn-glycero-3-phosphocholine + CoA. The catalysed reaction is a 1-acyl-sn-glycero-3-phospho-L-serine + an acyl-CoA = a 1,2-diacyl-sn-glycero-3-phospho-L-serine + CoA. It carries out the reaction 1-(9Z-octadecenoyl)-sn-glycero-3-phospho-L-serine + (9Z)-hexadecenoyl-CoA = 1-(9Z-octadecenoyl)-2-(9Z-hexadecenoyl)-sn-glycero-3-phospho-L-serine + CoA. It catalyses the reaction a 1-acyl-sn-glycero-3-phosphoethanolamine + an acyl-CoA = a 1,2-diacyl-sn-glycero-3-phosphoethanolamine + CoA. The enzyme catalyses 1-hexadecanoyl-sn-glycero-3-phosphoethanolamine + (9Z)-hexadecenoyl-CoA = 1-hexadecanoyl-2-(9Z)-hexadecenoyl-sn-glycero-3-phosphoethanolamine + CoA. The protein operates within lipid metabolism; phospholipid metabolism. Functionally, acyltransferase that mediates the acylation of lysophospholipids to produce phospholipids (glycerophospholipids). Highest activity with lysophosphatidylinositol (1-acyl-sn-glycero-3-phospho-(1D-myo-inositol) or LPI) producing phosphatidylinositol (1,2-diacyl-sn-glycero-3-phospho-(1D-myo-inositol) or PI) (LPIAT activity), but also converts lysophosphatidylcholine (1-acyl-sn-glycero-3-phosphocholine or LPC) to phosphatidylcholine (1,2-diacyl-sn-glycero-3-phosphocholine or PC) (LPCAT activity), lysophosphatidylserine (1-acyl-2-hydroxy-sn-glycero-3-phospho-L-serine or LPS) to phosphatidylserine (1,2-diacyl-sn-glycero-3-phospho-L-serine or PS) (LPSAT activity), and lysophosphatidylethanolamine (1-acyl-sn-glycero-3-phosphoethanolamine or LPE) producing phosphatidylethanolamine (1,2-diacyl-sn-glycero-3-phosphoethanolamine or PE) (LPEAT activity). Has a preference for unsaturated fatty acid arachidonoyl-CoA ((5Z,8Z,11Z,14Z)-eicosatetraenoyl-CoA). Glycerophospholipids are important structural and functional components of cellular membrane, acyl-chain remodeling regulates the molecular species distribution of glycerophospholipids which can affect membrane fluidity and curvature. This Drosophila melanogaster (Fruit fly) protein is Membrane-bound acylglycerophosphatidylinositol O-acyltransferase frj.